Consider the following 400-residue polypeptide: Integumentary mucin A.1 (400 aa).

The N-terminal stretch at 1–20 (MKHIILCIHFLLMVVGLGQA) is a signal peptide. 2 P-type domains span residues 21–64 (QDCS…FYNA) and 72–115 (LECS…YART). 3 disulfides stabilise this stretch: Cys23/Cys49, Cys33/Cys48, and Cys43/Cys60. Asn63 carries an N-linked (GlcNAc...) asparagine glycan. Disulfide bonds link Cys74/Cys100, Cys84/Cys99, and Cys94/Cys111. Low complexity-rich tracts occupy residues 122–264 (PDTT…DTTP) and 272–299 (ETTT…ETTT). Residues 122–302 (PDTTTASTTA…TTTETTTAPP (181 aa)) form a disordered region. 14 tandem repeats follow at residues 127 to 135 (ASTTAETTT), 136 to 144 (VPTTPETTT), 145 to 153 (VPTTPETTT), 154 to 162 (VPTTPETTT), 163 to 171 (VPTTPETTT), 172 to 180 (VPTTPETTT), 181 to 189 (VPTTPETTT), 190 to 198 (VPTTPETTT), 199 to 207 (VPTTPETTT), 208 to 216 (VPTTPETTT), 217 to 225 (VPTTPETTT), 226 to 234 (VPTTPETTT), 235 to 243 (ASTTAETTT), and 244 to 252 (VPTTPETTT). A 15 X 9 AA approximate tandem repeats of [AV]-[SP]-T-T-[AP]-E-T-T-T region spans residues 127–261 (ASTTAETTTV…TEPTTTPTTD (135 aa)). Residues 253–261 (EPTTTPTTD) form a 1-15; approximate repeat. Repeat copies occupy residues 272–275 (ETTT), 276–279 (ETTT), 280–283 (ETTT), 284–287 (ETTT), 288–291 (ETTT), 292–295 (ETTT), and 296–299 (ETTT). Residues 272–299 (ETTTETTTETTTETTTETTTETTTETTT) are 7 X 4 AA repeats of E-T-T-T. 2 P-type domains span residues 298 to 343 (TTAP…FYTE) and 351 to 394 (AECT…FEKA). Disulfide bonds link Cys312–Cys327, Cys322–Cys339, Cys353–Cys379, Cys363–Cys378, and Cys373–Cys390.

Post-translationally, extensively O-glycosylated. Consist of about 70% carbohydrate and 30% protein. Expressed and stored exclusively in mature mucous glands of the skin.

It localises to the secreted. Could be involved in defense against microbial infections. Protects the epithelia from external environment. The chain is Integumentary mucin A.1 from Xenopus laevis (African clawed frog).